The primary structure comprises 471 residues: 3-isopropylmalate dehydratase large subunit (471 aa).

Positions 346, 406, and 409 each coordinate [4Fe-4S] cluster.

It belongs to the aconitase/IPM isomerase family. LeuC type 1 subfamily. In terms of assembly, heterodimer of LeuC and LeuD. It depends on [4Fe-4S] cluster as a cofactor.

It carries out the reaction (2R,3S)-3-isopropylmalate = (2S)-2-isopropylmalate. It participates in amino-acid biosynthesis; L-leucine biosynthesis; L-leucine from 3-methyl-2-oxobutanoate: step 2/4. Its function is as follows. Catalyzes the isomerization between 2-isopropylmalate and 3-isopropylmalate, via the formation of 2-isopropylmaleate. The sequence is that of 3-isopropylmalate dehydratase large subunit from Bacillus pumilus (strain SAFR-032).